Reading from the N-terminus, the 245-residue chain is Dehydrogenase/reductase SDR family member 6 (245 aa).

NAD(+)-binding positions include 16-18 (QGI), aspartate 37, and aspartate 58. Substrate is bound at residue arginine 144. Tyrosine 147 serves as the catalytic Proton acceptor. NAD(+)-binding positions include lysine 151 and 180–184 (VDTPS). The substrate site is built by arginine 188 and arginine 205.

This sequence belongs to the short-chain dehydrogenases/reductases (SDR) family. Homotetramer. As to expression, detected in liver (at protein level).

It localises to the cytoplasm. It catalyses the reaction cis-4-hydroxy-L-proline + NAD(+) = 4-oxo-L-proline + NADH + H(+). The enzyme catalyses (R)-3-hydroxybutanoate + NAD(+) = acetoacetate + NADH + H(+). The protein operates within amino-acid metabolism. It functions in the pathway siderophore biosynthesis. NAD(H)-dependent dehydrogenase/reductase with a preference for cyclic substrates. Catalyzes stereoselective conversion of 4-oxo-L-proline to cis-4-hydroxy-L-proline, likely a detoxification mechanism for ketoprolines. Mediates the formation of 2,5-dihydroxybenzoate (2,5-DHBA), a siderophore that chelates free cytoplasmic iron and associates with LCN2, thereby regulating iron transport and homeostasis while protecting cells against free radical-induced oxidative stress. The iron-siderophore complex is imported into mitochondria, providing an iron source for mitochondrial metabolic processes in particular heme synthesis. May act as a 3-hydroxybutyrate dehydrogenase. This chain is Dehydrogenase/reductase SDR family member 6, found in Homo sapiens (Human).